The sequence spans 316 residues: Tetrahydromethanopterin S-methyltransferase subunit H (316 aa).

It belongs to the MtrH family. As to quaternary structure, the complex is composed of 8 subunits; MtrA, MtrB, MtrC, MtrD, MtrE, MtrF, MtrG and MtrH.

It catalyses the reaction 5-methyl-5,6,7,8-tetrahydromethanopterin + coenzyme M + 2 Na(+)(in) = 5,6,7,8-tetrahydromethanopterin + methyl-coenzyme M + 2 Na(+)(out). The protein operates within one-carbon metabolism; methanogenesis from CO(2); methyl-coenzyme M from 5,10-methylene-5,6,7,8-tetrahydromethanopterin: step 2/2. Functionally, part of a complex that catalyzes the formation of methyl-coenzyme M and tetrahydromethanopterin from coenzyme M and methyl-tetrahydromethanopterin. This is an energy-conserving, sodium-ion translocating step. MtrH catalyzes the transfer of the methyl group from methyl-tetrahydromethanopterin to the corrinoid prosthetic group of MtrA. The polypeptide is Tetrahydromethanopterin S-methyltransferase subunit H (Methanosarcina barkeri (strain Fusaro / DSM 804)).